The sequence spans 354 residues: DNA polymerase IV 2 (354 aa).

The region spanning 4 to 184 (IIHIDMDAFY…LPVKKFHGVG (181 aa)) is the UmuC domain. Residues Asp-8 and Asp-102 each contribute to the Mg(2+) site. Glu-103 is an active-site residue.

The protein belongs to the DNA polymerase type-Y family. Monomer. It depends on Mg(2+) as a cofactor.

Its subcellular location is the cytoplasm. It carries out the reaction DNA(n) + a 2'-deoxyribonucleoside 5'-triphosphate = DNA(n+1) + diphosphate. Poorly processive, error-prone DNA polymerase involved in untargeted mutagenesis. Copies undamaged DNA at stalled replication forks, which arise in vivo from mismatched or misaligned primer ends. These misaligned primers can be extended by PolIV. Exhibits no 3'-5' exonuclease (proofreading) activity. May be involved in translesional synthesis, in conjunction with the beta clamp from PolIII. In Rhizobium meliloti (strain 1021) (Ensifer meliloti), this protein is DNA polymerase IV 2 (dinB2).